Reading from the N-terminus, the 386-residue chain is 3-ketoacyl-CoA thiolase (386 aa).

C91 (acyl-thioester intermediate) is an active-site residue. Residues H342 and C372 each act as proton acceptor in the active site.

This sequence belongs to the thiolase-like superfamily. Thiolase family. As to quaternary structure, heterotetramer of two alpha chains (FadB) and two beta chains (FadA).

It localises to the cytoplasm. The catalysed reaction is an acyl-CoA + acetyl-CoA = a 3-oxoacyl-CoA + CoA. The protein operates within lipid metabolism; fatty acid beta-oxidation. Catalyzes the final step of fatty acid oxidation in which acetyl-CoA is released and the CoA ester of a fatty acid two carbons shorter is formed. The sequence is that of 3-ketoacyl-CoA thiolase from Pseudoalteromonas atlantica (strain T6c / ATCC BAA-1087).